Here is a 357-residue protein sequence, read N- to C-terminus: Peptide chain release factor 1 (357 aa).

Q234 is modified (N5-methylglutamine).

The protein belongs to the prokaryotic/mitochondrial release factor family. Post-translationally, methylated by PrmC. Methylation increases the termination efficiency of RF1.

It localises to the cytoplasm. Functionally, peptide chain release factor 1 directs the termination of translation in response to the peptide chain termination codons UAG and UAA. This chain is Peptide chain release factor 1, found in Frankia casuarinae (strain DSM 45818 / CECT 9043 / HFP020203 / CcI3).